Reading from the N-terminus, the 282-residue chain is Phosphate import ATP-binding protein PstB (282 aa).

Residues Met1–Pro10 are compositionally biased toward basic and acidic residues. Positions Met1–Thr24 are disordered. The span at Ala14–Thr24 shows a compositional bias: low complexity. Positions Ile36–Ile277 constitute an ABC transporter domain. Gly68–Ser75 serves as a coordination point for ATP.

This sequence belongs to the ABC transporter superfamily. Phosphate importer (TC 3.A.1.7) family. In terms of assembly, the complex is composed of two ATP-binding proteins (PstB), two transmembrane proteins (PstC and PstA) and a solute-binding protein (PstS).

It localises to the cell inner membrane. It catalyses the reaction phosphate(out) + ATP + H2O = ADP + 2 phosphate(in) + H(+). Functionally, part of the ABC transporter complex PstSACB involved in phosphate import. Responsible for energy coupling to the transport system. The polypeptide is Phosphate import ATP-binding protein PstB (Burkholderia thailandensis (strain ATCC 700388 / DSM 13276 / CCUG 48851 / CIP 106301 / E264)).